We begin with the raw amino-acid sequence, 334 residues long: 6-phosphogluconolactonase (334 aa).

Belongs to the cycloisomerase 2 family.

It carries out the reaction 6-phospho-D-glucono-1,5-lactone + H2O = 6-phospho-D-gluconate + H(+). It functions in the pathway carbohydrate degradation; pentose phosphate pathway; D-ribulose 5-phosphate from D-glucose 6-phosphate (oxidative stage): step 2/3. In terms of biological role, catalyzes the hydrolysis of 6-phosphogluconolactone to 6-phosphogluconate. The polypeptide is 6-phosphogluconolactonase (Yersinia pseudotuberculosis serotype IB (strain PB1/+)).